The chain runs to 365 residues: Embryonic developmental protein tofu-6 (365 aa).

In terms of domain architecture, RRM spans 13-90; the sequence is AGFHIRNVPK…YSLKVSDHKN (78 aa).

Required maternally for early embryonic cell divisions. May have a role in DNA replication. This is Embryonic developmental protein tofu-6 from Caenorhabditis briggsae.